A 368-amino-acid polypeptide reads, in one-letter code: Agmatine deiminase (368 aa).

Cys-357 (amidino-cysteine intermediate) is an active-site residue.

It belongs to the agmatine deiminase family. In terms of assembly, homodimer.

The catalysed reaction is agmatine + H2O = N-carbamoylputrescine + NH4(+). The protein operates within amine and polyamine biosynthesis; putrescine biosynthesis via agmatine pathway; N-carbamoylputrescine from agmatine: step 1/1. In terms of biological role, mediates the hydrolysis of agmatine into N-carbamoylputrescine in the arginine decarboxylase (ADC) pathway of putrescine biosynthesis, a basic polyamine. This Pseudomonas syringae pv. tomato (strain ATCC BAA-871 / DC3000) protein is Agmatine deiminase.